A 910-amino-acid polypeptide reads, in one-letter code: Periodic tryptophan protein 2 homolog (910 aa).

WD repeat units lie at residues 12-50, 53-92, 94-134, 144-183, 188-227, 271-310, 313-355, 358-397, 400-439, 443-485, 486-523, 525-563, 586-625, and 688-728; these read GTVY…SKTL, DCNY…KIYT, RSNK…KVYN, LSSD…NLFI, SHKG…GELV, GKSV…LVHN, VSEM…YVMK, AHSL…CTVT, EHTS…NFRT, PEPT…DILS, GHES…AETV, VSHE…NLGS, AKTK…ILKK, and RPEV…DPFQ. The disordered stretch occupies residues 867 to 910; it reads SKKSVKKEEEEEEDVSDESDDEDIEDESAGSDDEDSDDSVEIIE. Acidic residues predominate over residues 875–910; sequence EEEEEDVSDESDDEDIEDESAGSDDEDSDDSVEIIE.

This sequence belongs to the WD repeat PWP2 family.

The protein is Periodic tryptophan protein 2 homolog of Caenorhabditis elegans.